Here is a 132-residue protein sequence, read N- to C-terminus: Fatty acid-binding protein type 3 (132 aa).

It belongs to the calycin superfamily. Fatty-acid binding protein (FABP) family.

The sequence is that of Fatty acid-binding protein type 3 from Fasciola hepatica (Liver fluke).